A 523-amino-acid chain; its full sequence is Nondiscriminating glutamyl-tRNA synthetase EARS2, mitochondrial (523 aa).

Residues 1–41 (MAALLRRLLQRERPSAASGRPVGRREANLGTDAGVAVRVRF) constitute a mitochondrion transit peptide. 40 to 42 (RFA) is an L-glutamate binding site. The 'HIGH' region signature appears at 45–53 (PTGFLHLGG). Residue His-50 coordinates ATP. Residues Glu-76, 228 to 232 (YHLAC), and Arg-246 contribute to the L-glutamate site. Glu-249 contributes to the ATP binding site. Lys-256 carries the N6-succinyllysine modification. 284–288 (KLSKR) contributes to the ATP binding site. Positions 284–288 (KLSKR) match the 'KMSKS' region motif. At Lys-486 the chain carries N6-acetyllysine.

This sequence belongs to the class-I aminoacyl-tRNA synthetase family. Glutamate--tRNA ligase type 1 subfamily.

It is found in the mitochondrion matrix. The catalysed reaction is tRNA(Glx) + L-glutamate + ATP = L-glutamyl-tRNA(Glx) + AMP + diphosphate. The enzyme catalyses tRNA(Glu) + L-glutamate + ATP = L-glutamyl-tRNA(Glu) + AMP + diphosphate. It catalyses the reaction tRNA(Gln) + L-glutamate + ATP = L-glutamyl-tRNA(Gln) + AMP + diphosphate. In terms of biological role, non-discriminating glutamyl-tRNA synthetase that catalyzes aminoacylation of both mitochondrial tRNA(Glu) and tRNA(Gln) and participates in RNA aminoacylation for mitochondrial protein translation. Attachs glutamate to tRNA(Glu) or tRNA(Gln) in a two-step reaction: glutamate is first activated by ATP to form Glu-AMP and then transferred to the acceptor end of tRNA(Glu) or tRNA(Gln). In vitro, cytoplasmic tRNA(Gln) is slightly glutamylated, but with low activity. The polypeptide is Nondiscriminating glutamyl-tRNA synthetase EARS2, mitochondrial (Homo sapiens (Human)).